Here is a 355-residue protein sequence, read N- to C-terminus: MPFLGQDWRSPGQSWVKTADGWKRFLDEKSGSFVSDLSSYCNKEVYNKENLFNSLNYDVAAKKRKKDMLNSKTKTQYFHQEKWIYVHKGSTKERHGYCTLGEAFNRLDFSTAILDSRRFNYVVRLLELIAKSQLTSLSGIAQKNFMNILEKVVLKVLEDQQNIRLIRELLQTLYTSLCTLVQRVGKSVLVGNINMWVYRMETILHWQQQLNNIQITRPAFKGLTFTDLPLCLQLNIMQRLSDGRDLVSLGQVAPDLHVLSEDRLLWKKLCQYHFSERQIRKRLILSDKGQLDWKKMYFKLVRCYPRKEQYGDTLQLCRHCHILSWKGTDHPCTANNPESCSVSLSPQDFINLFKF.

The Nuclear localization signal signature appears at 62–67 (KKRKKD). The Nuclear export signal motif lies at 169 to 173 (LLQTL). The 49-residue stretch at 223 to 271 (LTFTDLPLCLQLNIMQRLSDGRDLVSLGQVAPDLHVLSEDRLLWKKLCQ) folds into the F-box domain. Positions 280–295 (RKRLILSDKGQLDWKK) match the Bipartite nuclear localization signal motif.

In terms of assembly, part of the SCF (SKP1-CUL1-F-box) E3 ubiquitin-protein ligase complex SCF(FBXO32) formed of CUL1, SKP1, RBX1 and FBXO32.

It is found in the cytoplasm. It localises to the nucleus. Its pathway is protein modification; protein ubiquitination. Functionally, substrate recognition component of a SCF (SKP1-CUL1-F-box protein) E3 ubiquitin-protein ligase complex which mediates the ubiquitination and subsequent proteasomal degradation of target proteins. Probably recognizes and binds to phosphorylated target proteins during skeletal muscle atrophy. Recognizes TERF1. The polypeptide is F-box only protein 32 (FBXO32) (Sus scrofa (Pig)).